We begin with the raw amino-acid sequence, 82 residues long: Small ribosomal subunit protein bS16 (82 aa).

The protein belongs to the bacterial ribosomal protein bS16 family.

The protein is Small ribosomal subunit protein bS16 of Caldanaerobacter subterraneus subsp. tengcongensis (strain DSM 15242 / JCM 11007 / NBRC 100824 / MB4) (Thermoanaerobacter tengcongensis).